Consider the following 165-residue polypeptide: SsrA-binding protein (165 aa).

Positions 135 to 158 (QAHDKRQDMARRDAQREVTRELGR) are enriched in basic and acidic residues. Residues 135–165 (QAHDKRQDMARRDAQREVTRELGRRVKGMTN) are disordered.

Belongs to the SmpB family.

Its subcellular location is the cytoplasm. In terms of biological role, required for rescue of stalled ribosomes mediated by trans-translation. Binds to transfer-messenger RNA (tmRNA), required for stable association of tmRNA with ribosomes. tmRNA and SmpB together mimic tRNA shape, replacing the anticodon stem-loop with SmpB. tmRNA is encoded by the ssrA gene; the 2 termini fold to resemble tRNA(Ala) and it encodes a 'tag peptide', a short internal open reading frame. During trans-translation Ala-aminoacylated tmRNA acts like a tRNA, entering the A-site of stalled ribosomes, displacing the stalled mRNA. The ribosome then switches to translate the ORF on the tmRNA; the nascent peptide is terminated with the 'tag peptide' encoded by the tmRNA and targeted for degradation. The ribosome is freed to recommence translation, which seems to be the essential function of trans-translation. This Mycolicibacterium gilvum (strain PYR-GCK) (Mycobacterium gilvum (strain PYR-GCK)) protein is SsrA-binding protein.